Here is a 516-residue protein sequence, read N- to C-terminus: Calcium and calcium/calmodulin-dependent serine/threonine-protein kinase (516 aa).

Positions Tyr-13 to Val-298 constitute a Protein kinase domain. ATP is bound by residues Leu-19–Val-27 and Lys-43. Asp-163 (proton acceptor) is an active-site residue. At Thr-263 the chain carries Phosphothreonine. Residues Ala-321–Leu-334 are calmodulin-binding. A coiled-coil region spans residues Lys-343–Arg-363. 3 EF-hand domains span residues Ser-392 to Ser-427, Arg-428 to Glu-463, and Thr-470 to Leu-505. Ca(2+) is bound by residues Asp-405, Asn-407, Asp-409, Thr-411, Glu-416, Asp-441, Asp-443, Ser-445, Cys-447, Glu-452, Asp-483, Asp-485, Asp-487, Lys-489, and Glu-494.

This sequence belongs to the protein kinase superfamily. CAMK Ser/Thr protein kinase family. CaMK subfamily. In terms of processing, autophosphorylation. As to expression, mainly expressed in roots and panicles. Detected in leaves, shoots and culms.

Its subcellular location is the nucleus. It is found in the cytoplasm. The protein localises to the cell membrane. The enzyme catalyses L-seryl-[protein] + ATP = O-phospho-L-seryl-[protein] + ADP + H(+). It catalyses the reaction L-threonyl-[protein] + ATP = O-phospho-L-threonyl-[protein] + ADP + H(+). Its function is as follows. Calcium- and calmodulin-dependent protein kinase required for arbuscular mycorrhizal (AM) symbiosis. Involved in response to water deprivation stress. Required for abscisic acid-induced antioxidant defense and oxidative stress tolerance during dehydration stress. Functions upstream of MPK1 in an abscisic acid signaling pathway that regulates the activities of antioxidant enzymes and the production of hydrogen peroxide. In Oryza sativa subsp. japonica (Rice), this protein is Calcium and calcium/calmodulin-dependent serine/threonine-protein kinase (CCAMK).